Reading from the N-terminus, the 382-residue chain is D-galactonate dehydratase (382 aa).

Mg(2+) is bound at residue Asp-183. The active-site Proton donor is the His-185. Residues Glu-209 and Glu-235 each coordinate Mg(2+). His-285 serves as the catalytic Proton acceptor.

It belongs to the mandelate racemase/muconate lactonizing enzyme family. GalD subfamily. It depends on Mg(2+) as a cofactor.

It carries out the reaction D-galactonate = 2-dehydro-3-deoxy-D-galactonate + H2O. It participates in carbohydrate acid metabolism; D-galactonate degradation; D-glyceraldehyde 3-phosphate and pyruvate from D-galactonate: step 1/3. In terms of biological role, catalyzes the dehydration of D-galactonate to 2-keto-3-deoxy-D-galactonate. This chain is D-galactonate dehydratase, found in Escherichia coli O9:H4 (strain HS).